The sequence spans 257 residues: Ribonuclease HII (257 aa).

One can recognise an RNase H type-2 domain in the interval 72–257 (TYIAGIDEVG…FAPIKDMIQK (186 aa)). A divalent metal cation is bound by residues Asp-78, Glu-79, and Asp-170.

Belongs to the RNase HII family. Requires Mn(2+) as cofactor. Mg(2+) is required as a cofactor.

The protein localises to the cytoplasm. The catalysed reaction is Endonucleolytic cleavage to 5'-phosphomonoester.. Functionally, endonuclease that specifically degrades the RNA of RNA-DNA hybrids. In Bacillus cereus (strain ZK / E33L), this protein is Ribonuclease HII.